A 328-amino-acid chain; its full sequence is Arylacetonitrilase (328 aa).

Residues 5–278 enclose the CN hydrolase domain; it reads VRVAVTQAEP…EGIIYADLDL (274 aa). Residue Glu45 is the Proton acceptor of the active site. Residue Lys125 is part of the active site. The active-site Nucleophile is Cys160.

This sequence belongs to the carbon-nitrogen hydrolase superfamily. Nitrilase family.

The enzyme catalyses a nitrile + 2 H2O = a carboxylate + NH4(+). The catalysed reaction is 4-chlorophenylacetonitrile + 2 H2O = 4-chlorophenylacetate + NH4(+). Functionally, nitrilase that hydrolyzes preferentially phenylacetonitrile and (R,S)-mandelonitrile. Also acts on dinitriles like phenylenediacetonitriles (PDAs) 1,2-PDA, 1,3-PDA, and 1,4-PDA, and cyanophenyl acetonitriles (CPAs) 2-CPA and 4-CPA. This Aspergillus kawachii (strain NBRC 4308) (White koji mold) protein is Arylacetonitrilase (nit2).